We begin with the raw amino-acid sequence, 175 residues long: Type-2 ice-structuring protein (175 aa).

Residues 1-16 (MLAALLVCAMVALTRA) form the signal peptide. A propeptide spanning residues 17-33 (ANGDTGKEAVMTGSSGK) is cleaved from the precursor. The region spanning 36-163 (TECPTDWKMF…LHASVCAKPA (128 aa)) is the C-type lectin domain. 5 cysteine pairs are disulfide-bonded: Cys38–Cys49, Cys66–Cys159, Cys103–Cys134, Cys123–Cys145, and Cys135–Cys151.

Its subcellular location is the secreted. Antifreeze proteins lower the blood freezing point. The chain is Type-2 ice-structuring protein from Osmerus mordax (Rainbow smelt).